Here is a 442-residue protein sequence, read N- to C-terminus: Asparagine--tRNA ligase (442 aa).

The protein belongs to the class-II aminoacyl-tRNA synthetase family. As to quaternary structure, homodimer.

It is found in the cytoplasm. The enzyme catalyses tRNA(Asn) + L-asparagine + ATP = L-asparaginyl-tRNA(Asn) + AMP + diphosphate + H(+). The polypeptide is Asparagine--tRNA ligase (Koribacter versatilis (strain Ellin345)).